Reading from the N-terminus, the 596-residue chain is Pumilio homolog 12 (596 aa).

Residues 254 to 596 (LNEDLTMSLN…KVLSALSSKK (343 aa)) form the PUM-HD domain. Pumilio repeat units follow at residues 277-312 (EARG…MIFN), 313-348 (EIID…QIVH), 349-388 (SITR…IIIS), 389-424 (ALKH…FLFE), 425-460 (AAIT…HLVS), 461-496 (EIAS…EILE), 497-532 (QLEG…RIIR), and 533-570 (ELIN…LLVD).

The protein resides in the cytoplasm. It is found in the nucleus. In terms of biological role, sequence-specific RNA-binding protein that regulates translation and mRNA stability by binding the 3'-UTR of target mRNAs. This is Pumilio homolog 12 (APUM12) from Arabidopsis thaliana (Mouse-ear cress).